Here is a 419-residue protein sequence, read N- to C-terminus: Phosphoglycerate kinase (419 aa).

Substrate-binding positions include 21–23 (DFN), Arg-36, 60–63 (HLGD), Arg-137, and Arg-174. ATP contacts are provided by residues Lys-225, Gly-316, Glu-347, and 376–379 (GGDS).

Belongs to the phosphoglycerate kinase family. As to quaternary structure, monomer.

The protein localises to the cytoplasm. It catalyses the reaction (2R)-3-phosphoglycerate + ATP = (2R)-3-phospho-glyceroyl phosphate + ADP. It functions in the pathway carbohydrate degradation; glycolysis; pyruvate from D-glyceraldehyde 3-phosphate: step 2/5. The protein is Phosphoglycerate kinase (pgk) of Treponema pallidum (strain Nichols).